The primary structure comprises 500 residues: L-arabinose isomerase (500 aa).

Residues E306, E333, H350, and H450 each coordinate Mn(2+).

It belongs to the arabinose isomerase family. Homohexamer. Mn(2+) is required as a cofactor.

The enzyme catalyses beta-L-arabinopyranose = L-ribulose. The protein operates within carbohydrate degradation; L-arabinose degradation via L-ribulose; D-xylulose 5-phosphate from L-arabinose (bacterial route): step 1/3. Its function is as follows. Catalyzes the conversion of L-arabinose to L-ribulose. The sequence is that of L-arabinose isomerase from Shigella boydii serotype 18 (strain CDC 3083-94 / BS512).